The following is a 500-amino-acid chain: L-arabinose isomerase (500 aa).

Mn(2+) is bound by residues E306, E333, H349, and H448.

Belongs to the arabinose isomerase family. The cofactor is Mn(2+).

The enzyme catalyses beta-L-arabinopyranose = L-ribulose. It functions in the pathway carbohydrate degradation; L-arabinose degradation via L-ribulose; D-xylulose 5-phosphate from L-arabinose (bacterial route): step 1/3. Its function is as follows. Catalyzes the conversion of L-arabinose to L-ribulose. The polypeptide is L-arabinose isomerase (Shewanella baltica (strain OS223)).